A 203-amino-acid chain; its full sequence is Cell division protein SepF (203 aa).

Disordered stretches follow at residues 26-51 (DGELEQVQPAYQEEPPRRSAPERRGQ) and 167-203 (GTASGSQEGDLLARTARRSEEGDRTGADRSKFDWRNQ). Composition is skewed to basic and acidic residues over residues 39 to 50 (EPPRRSAPERRG) and 183 to 203 (RRSEEGDRTGADRSKFDWRNQ).

It belongs to the SepF family. In terms of assembly, homodimer. Interacts with FtsZ.

It is found in the cytoplasm. In terms of biological role, cell division protein that is part of the divisome complex and is recruited early to the Z-ring. Probably stimulates Z-ring formation, perhaps through the cross-linking of FtsZ protofilaments. Its function overlaps with FtsA. This Symbiobacterium thermophilum (strain DSM 24528 / JCM 14929 / IAM 14863 / T) protein is Cell division protein SepF.